A 65-amino-acid chain; its full sequence is Large ribosomal subunit protein bL35 (65 aa).

It belongs to the bacterial ribosomal protein bL35 family.

The chain is Large ribosomal subunit protein bL35 from Parabacteroides distasonis (strain ATCC 8503 / DSM 20701 / CIP 104284 / JCM 5825 / NCTC 11152).